The sequence spans 130 residues: Small ribosomal subunit protein uS8 (130 aa).

The protein belongs to the universal ribosomal protein uS8 family. In terms of assembly, part of the 30S ribosomal subunit. Contacts proteins S5 and S12.

One of the primary rRNA binding proteins, it binds directly to 16S rRNA central domain where it helps coordinate assembly of the platform of the 30S subunit. This chain is Small ribosomal subunit protein uS8, found in Aliivibrio fischeri (strain MJ11) (Vibrio fischeri).